Reading from the N-terminus, the 72-residue chain is Cytochrome c oxidase subunit 2 (72 aa).

Over 1–14 (MAHPSQLGFQDAAS) the chain is Mitochondrial intermembrane. Residues 15-45 (PVMEELLHFHDHALMIVFLISTLVLYIIVAM) form a helical membrane-spanning segment. Residues 46–72 (VSTKLTNKYXLDSQEIEVIWTXLPAVI) lie on the Mitochondrial matrix side of the membrane.

It belongs to the cytochrome c oxidase subunit 2 family. Component of the cytochrome c oxidase (complex IV, CIV), a multisubunit enzyme composed of 14 subunits. The complex is composed of a catalytic core of 3 subunits MT-CO1, MT-CO2 and MT-CO3, encoded in the mitochondrial DNA, and 11 supernumerary subunits COX4I, COX5A, COX5B, COX6A, COX6B, COX6C, COX7A, COX7B, COX7C, COX8 and NDUFA4, which are encoded in the nuclear genome. The complex exists as a monomer or a dimer and forms supercomplexes (SCs) in the inner mitochondrial membrane with NADH-ubiquinone oxidoreductase (complex I, CI) and ubiquinol-cytochrome c oxidoreductase (cytochrome b-c1 complex, complex III, CIII), resulting in different assemblies (supercomplex SCI(1)III(2)IV(1) and megacomplex MCI(2)III(2)IV(2)). Found in a complex with TMEM177, COA6, COX18, COX20, SCO1 and SCO2. Interacts with TMEM177 in a COX20-dependent manner. Interacts with COX20. Interacts with COX16. Cu cation serves as cofactor.

The protein localises to the mitochondrion inner membrane. It catalyses the reaction 4 Fe(II)-[cytochrome c] + O2 + 8 H(+)(in) = 4 Fe(III)-[cytochrome c] + 2 H2O + 4 H(+)(out). Functionally, component of the cytochrome c oxidase, the last enzyme in the mitochondrial electron transport chain which drives oxidative phosphorylation. The respiratory chain contains 3 multisubunit complexes succinate dehydrogenase (complex II, CII), ubiquinol-cytochrome c oxidoreductase (cytochrome b-c1 complex, complex III, CIII) and cytochrome c oxidase (complex IV, CIV), that cooperate to transfer electrons derived from NADH and succinate to molecular oxygen, creating an electrochemical gradient over the inner membrane that drives transmembrane transport and the ATP synthase. Cytochrome c oxidase is the component of the respiratory chain that catalyzes the reduction of oxygen to water. Electrons originating from reduced cytochrome c in the intermembrane space (IMS) are transferred via the dinuclear copper A center (CU(A)) of subunit 2 and heme A of subunit 1 to the active site in subunit 1, a binuclear center (BNC) formed by heme A3 and copper B (CU(B)). The BNC reduces molecular oxygen to 2 water molecules using 4 electrons from cytochrome c in the IMS and 4 protons from the mitochondrial matrix. The protein is Cytochrome c oxidase subunit 2 (mt-co2) of Gomphosus varius (Bird wrasse).